The primary structure comprises 723 residues: Malonamoyl-CoA synthetase vrtB (723 aa).

The protein belongs to the ATP-dependent AMP-binding enzyme family.

It participates in secondary metabolite biosynthesis; terpenoid biosynthesis. Malonamoyl-CoA synthetase; part of the gene cluster that mediates the biosynthesis of viridicatumtoxin, a tetracycline-like fungal meroterpenoid with a unique, fused spirobicyclic ring system. The first step of the pathway is the production of the malonamoyl-CoA starter unit for the polyketide synthase vrtA. The aldolase vrtJ may be involved in the synthesis of the malonamate substrate for malonamoyl-CoA synthetase vrtB. The polyketide synthase vrtA then may utilize the malonamoyl-CoA starter unit, followed by sequential condensation of eight malonyl-CoA units to form the polyketide backbone. The cyclization of the last ring could be mediated by the lactamase-like protein vrtG. The proposed post-PKS tailoring steps are a hydroxylation at C5 catalyzed the cytochrome P450 monooxygenase vrtE, a hydroxylation at C12a catalyzed by VrtH and/or VrtI, and an O-methylation by the O-methyltransferase vrtF. VrtC is then proposed to catalyze the transfer of a geranyl group synthesized by vrtD to the aromatic C ring of the tetracyclic polyketide intermediate of viridicatumtoxin to yield previridicatumtoxin. Finally, the cytochrome P450 monooxygenase vrtK catalyzes the spirocyclization of the geranyl moiety of previridicatumtoxin to afford viridicatumtoxin. The chain is Malonamoyl-CoA synthetase vrtB from Penicillium aethiopicum.